Consider the following 69-residue polypeptide: Guanine nucleotide-binding protein subunit gamma (69 aa).

Ser-2 carries the N-acetylserine modification. A Cysteine methyl ester modification is found at Cys-66. The S-geranylgeranyl cysteine moiety is linked to residue Cys-66. The propeptide at 67–69 (SVL) is removed in mature form.

Belongs to the G protein gamma family. As to quaternary structure, g proteins are composed of 3 units, alpha, beta and gamma. Interacts with gpbA, and this requires phlp1. In terms of processing, this protein is thought to be subject to lipidation, and this requires phlp1.

The protein localises to the cell membrane. In terms of biological role, guanine nucleotide-binding proteins (G proteins) are involved as a modulator or transducer in various transmembrane signaling systems. This major G-protein of the squid photoreceptor is involved in visual transduction. The beta and gamma chains are required for the GTPase activity, for replacement of GDP by GTP, and for G protein-effector interaction. Required for normal chemotaxis in response to cAMP. The polypeptide is Guanine nucleotide-binding protein subunit gamma (gpgA) (Dictyostelium discoideum (Social amoeba)).